The following is a 265-amino-acid chain: Undecaprenyl-diphosphatase (265 aa).

8 helical membrane passes run 1–21 (MDIFQALFLGLLQGLTEFLPI), 39–59 (QGVGFDLSVHVGTLLAVVLYF), 84–104 (ALAWYLVIGTIPAGLAGLALL), 114–134 (ASVIFFTTLVFGILLGIADWL), 144–164 (LNWKDAVIVGIAQAMALVPGT), 187–207 (FSFLLAIPIIVLASAVKLLEV), 218–238 (GFLIGGVTSFLMAITAIHFFL), and 244–264 (VGMWPYVIYRIILAGVIYAVL).

The protein belongs to the UppP family.

Its subcellular location is the cell inner membrane. It carries out the reaction di-trans,octa-cis-undecaprenyl diphosphate + H2O = di-trans,octa-cis-undecaprenyl phosphate + phosphate + H(+). Its function is as follows. Catalyzes the dephosphorylation of undecaprenyl diphosphate (UPP). Confers resistance to bacitracin. The sequence is that of Undecaprenyl-diphosphatase from Marinobacter nauticus (strain ATCC 700491 / DSM 11845 / VT8) (Marinobacter aquaeolei).